The sequence spans 307 residues: MPEIYHYLQQLVNGLTVGSTYALIAIGYTMVYGIIGMINFAHGEVYMIGSYIAFIAITLLAMMGLDSVPLMMLAAFAASIIVTSAFGYSIERVAYRPLRGGNRLIPLISAIGMSIFLQNAVMLSQDSKEKAIPTLLPGNFVFGESSMNGVVISYMQILIFVVTFLVMFGLTLFISRSRLGRACRACAEDLKMTNLLGINSNNIIALTFVIGAALAAVAAVLLGMQYGVINPGIGFLAGIKAFTAAVLGGIGSIPGAMLGGLLLGVAEAFGADVFGDQYKDVVAFGLLILVLLFRPTGILGRPEVEKV.

10 helical membrane-spanning segments follow: residues 21–41, 45–65, 70–90, 104–124, 132–152, 154–174, 203–223, 224–244, 245–265, and 280–300; these read YALI…INFA, VYMI…MMGL, LMML…GYSI, LIPL…VMLS, IPTL…GVVI, YMQI…TLFI, IIAL…VLLG, MQYG…AFTA, AVLG…LLGV, and DVVA…GILG.

Belongs to the binding-protein-dependent transport system permease family. LivHM subfamily.

The protein localises to the cell inner membrane. Component of the high affinity leucine, isoleucine, valine, transport system (LIV-I), which is operative without Na(+) and is specific for alanine and threonine, in addition to branched-chain amino acids. This is High-affinity branched-chain amino acid transport system permease protein BraD (braD) from Pseudomonas aeruginosa (strain ATCC 15692 / DSM 22644 / CIP 104116 / JCM 14847 / LMG 12228 / 1C / PRS 101 / PAO1).